A 223-amino-acid polypeptide reads, in one-letter code: Urease accessory protein UreG (223 aa).

The tract at residues 1-30 (MAKHSHDHTHDHHDRPRRVRKPGEPLRIGV) is disordered. 32 to 39 (GPVGSGKT) contributes to the GTP binding site.

It belongs to the SIMIBI class G3E GTPase family. UreG subfamily. In terms of assembly, homodimer. UreD, UreF and UreG form a complex that acts as a GTP-hydrolysis-dependent molecular chaperone, activating the urease apoprotein by helping to assemble the nickel containing metallocenter of UreC. The UreE protein probably delivers the nickel.

Its subcellular location is the cytoplasm. In terms of biological role, facilitates the functional incorporation of the urease nickel metallocenter. This process requires GTP hydrolysis, probably effectuated by UreG. This chain is Urease accessory protein UreG, found in Mycobacterium ulcerans (strain Agy99).